The primary structure comprises 308 residues: Ribosomal RNA large subunit methyltransferase F (308 aa).

Belongs to the methyltransferase superfamily. METTL16/RlmF family.

The protein localises to the cytoplasm. It carries out the reaction adenosine(1618) in 23S rRNA + S-adenosyl-L-methionine = N(6)-methyladenosine(1618) in 23S rRNA + S-adenosyl-L-homocysteine + H(+). Its function is as follows. Specifically methylates the adenine in position 1618 of 23S rRNA. The polypeptide is Ribosomal RNA large subunit methyltransferase F (Salmonella schwarzengrund (strain CVM19633)).